Here is a 527-residue protein sequence, read N- to C-terminus: Ankyrin repeat domain-containing protein 42 (527 aa).

The tract at residues 1–27 (MPGVANPGPSKSRRETADSSSRKKVHF) is disordered. Basic and acidic residues predominate over residues 12 to 21 (SRRETADSSS). ANK repeat units lie at residues 25-54 (VHFS…NLNE), 59-88 (HQFT…DATQ), 92-121 (RGWT…NLAT), 125-154 (RGCT…DPSV), 158-187 (REWK…GIED), 191-220 (NGNL…SATQ), 228-257 (NGEN…EGSH), 263-293 (DLAF…NLNE), 297-326 (NGST…ESNI), and 330-360 (AGET…EIDD). A coiled-coil region spans residues 395–484 (NARMRAHKKI…ETLQKIQVTS (90 aa)).

The polypeptide is Ankyrin repeat domain-containing protein 42 (Ankrd42) (Mus musculus (Mouse)).